The chain runs to 293 residues: Cbb3-type cytochrome c oxidase subunit FixP (293 aa).

Basic and acidic residues predominate over residues 1-11; it reads MSTSHESHHAP. Residues 1–25 are disordered; that stretch reads MSTSHESHHAPVDGAGGPSTTGHEW. Residues 43–63 traverse the membrane as a helical segment; that stretch reads FYATIIWAFGYWVAYPAWPLV. Cytochrome c domains are found at residues 114–201 and 209–290; these read LARA…RSLS and PAAK…HTLG. Positions 127, 130, 131, 178, 222, 225, 226, and 267 each coordinate heme c.

It belongs to the CcoP / FixP family. In terms of assembly, component of the cbb3-type cytochrome c oxidase at least composed of FixN, FixO, FixQ and FixP. Requires heme c as cofactor.

It localises to the cell inner membrane. It participates in energy metabolism; oxidative phosphorylation. C-type cytochrome. Part of the cbb3-type cytochrome c oxidase complex. FixP subunit is required for transferring electrons from donor cytochrome c via its heme groups to FixO subunit. From there, electrons are shuttled to the catalytic binuclear center of FixN subunit where oxygen reduction takes place. The complex also functions as a proton pump. The polypeptide is Cbb3-type cytochrome c oxidase subunit FixP (Azorhizobium caulinodans (strain ATCC 43989 / DSM 5975 / JCM 20966 / LMG 6465 / NBRC 14845 / NCIMB 13405 / ORS 571)).